Reading from the N-terminus, the 50-residue chain is Large ribosomal subunit protein bL33 (50 aa).

It belongs to the bacterial ribosomal protein bL33 family.

The chain is Large ribosomal subunit protein bL33 from Sulfurovum sp. (strain NBC37-1).